The chain runs to 363 residues: 2,5-diketocamphane 1,2-monooxygenase 2 (363 aa).

FMN contacts are provided by residues Met74 and 186-194 (TGLTKNSSS).

Belongs to the bacterial luciferase oxidoreductase family. In terms of assembly, homodimer. Likely forms a loose transient complex with a P.putida flavin reductase that provides the required FMNH(2) to the enzyme.

The catalysed reaction is (1R,4R)-bornane-2,5-dione + FMNH2 + O2 = (1R,4R)-5-oxo-1,2-campholide + FMN + H2O + H(+). It participates in terpene metabolism; (R)-camphor degradation. In terms of biological role, involved in the degradation and assimilation of (+)-camphor, which allows P.putida strain NCIMB 10007 to grow on this enantiomer of camphor as the sole carbon source. Catalyzes the FMNH(2)-dependent lactonization of 2,5-diketocamphane via a Baeyer-Villiger oxidation to produce the unstable lactone 5-oxo-1,2-campholide with (R,R) configuration, that presumably undergoes spontaneous hydrolysis to form 2-oxo-Delta(3)-4,5,5-trimethylcyclopentenylacetate. Is also able to convert (+)-camphor and norcamphor to the corresponding lactone in vitro. Shows no conversion of (-)-camphor, (+)-fenchone, (-)-fenchone, and (+)-nopinone. Acts on other bicyclic ketones and, to a lesser extent, on some 2- and 4-substituted monocyclic ketones. The sequence is that of 2,5-diketocamphane 1,2-monooxygenase 2 from Pseudomonas putida (Arthrobacter siderocapsulatus).